A 126-amino-acid chain; its full sequence is Large ribosomal subunit protein bL17 (126 aa).

It belongs to the bacterial ribosomal protein bL17 family. As to quaternary structure, part of the 50S ribosomal subunit. Contacts protein L32.

In Coxiella burnetii (strain CbuG_Q212) (Coxiella burnetii (strain Q212)), this protein is Large ribosomal subunit protein bL17.